The primary structure comprises 557 residues: Potassium-transporting ATPase potassium-binding subunit (557 aa).

A run of 12 helical transmembrane segments spans residues 5 to 25 (GFLL…PLGS), 63 to 83 (LCAI…MLLG), 132 to 152 (GLTV…FALI), 170 to 190 (LLRI…LFFI), 253 to 273 (FVQM…FGEV), 283 to 303 (LLWA…WAEV), 329 to 349 (VLVS…AVIA), 356 to 376 (ALGG…FGGV), 379 to 399 (GLYG…LMIG), 416 to 436 (LTAL…ALAM), 484 to 504 (LLAF…MAIA), and 526 to 546 (LFVG…FIPA).

It belongs to the KdpA family. As to quaternary structure, the system is composed of three essential subunits: KdpA, KdpB and KdpC.

Its subcellular location is the cell inner membrane. Its function is as follows. Part of the high-affinity ATP-driven potassium transport (or Kdp) system, which catalyzes the hydrolysis of ATP coupled with the electrogenic transport of potassium into the cytoplasm. This subunit binds the periplasmic potassium ions and delivers the ions to the membrane domain of KdpB through an intramembrane tunnel. This Escherichia coli (strain SE11) protein is Potassium-transporting ATPase potassium-binding subunit.